The following is a 181-amino-acid chain: Oligoribonuclease (181 aa).

One can recognise an Exonuclease domain in the interval 8–171; sequence LIWVDLEMTG…DDIRESIAEL (164 aa). The active site involves Y129.

The protein belongs to the oligoribonuclease family.

It localises to the cytoplasm. Its function is as follows. 3'-to-5' exoribonuclease specific for small oligoribonucleotides. This is Oligoribonuclease from Aliivibrio fischeri (strain ATCC 700601 / ES114) (Vibrio fischeri).